Reading from the N-terminus, the 125-residue chain is MRHYEIILLIHPDQSEQVPAMLERYKGMITAGGGKIHRVEDWGRRQLAYMINKLAKAHYLCVNIEADQAVMAELEHAFKFNDAVLRHLTVVKKKAETGASSMMKTVEREEARKASQAEFAAANER.

Positions 96 to 125 are disordered; the sequence is ETGASSMMKTVEREEARKASQAEFAAANER. Positions 105-115 are enriched in basic and acidic residues; the sequence is TVEREEARKAS.

This sequence belongs to the bacterial ribosomal protein bS6 family.

Its function is as follows. Binds together with bS18 to 16S ribosomal RNA. The polypeptide is Small ribosomal subunit protein bS6 (Paracidovorax citrulli (strain AAC00-1) (Acidovorax citrulli)).